The chain runs to 163 residues: NADH-quinone oxidoreductase subunit I (163 aa).

4Fe-4S ferredoxin-type domains lie at 53 to 83 (LRRYPNGEERCIACKLCEAICPAQAITIEAG) and 94 to 123 (VRYDIDMVKCIYCGFCQEACPVEAIVEGPN). Cysteine 63, cysteine 66, cysteine 69, cysteine 73, cysteine 103, cysteine 106, cysteine 109, and cysteine 113 together coordinate [4Fe-4S] cluster.

It belongs to the complex I 23 kDa subunit family. As to quaternary structure, NDH-1 is composed of 14 different subunits. Subunits NuoA, H, J, K, L, M, N constitute the membrane sector of the complex. It depends on [4Fe-4S] cluster as a cofactor.

It is found in the cell inner membrane. The catalysed reaction is a quinone + NADH + 5 H(+)(in) = a quinol + NAD(+) + 4 H(+)(out). Functionally, NDH-1 shuttles electrons from NADH, via FMN and iron-sulfur (Fe-S) centers, to quinones in the respiratory chain. The immediate electron acceptor for the enzyme in this species is believed to be ubiquinone. Couples the redox reaction to proton translocation (for every two electrons transferred, four hydrogen ions are translocated across the cytoplasmic membrane), and thus conserves the redox energy in a proton gradient. The polypeptide is NADH-quinone oxidoreductase subunit I (Bartonella quintana (strain Toulouse) (Rochalimaea quintana)).